The primary structure comprises 390 residues: Cell division protein FtsZ (390 aa).

Residues 21–25 (GGGNN), 108–110 (GTG), glutamate 139, arginine 143, and aspartate 187 contribute to the GTP site. Residues 315 to 390 (FDDKPTSHGR…EERRSRRTRR (76 aa)) form a disordered region. Positions 326 to 360 (SGSTGFGTSVNTSSNATSKDESFTSNSSNAQATDS) are enriched in polar residues. Positions 361 to 384 (VSERTHTTKEDDIPSFIRNREERR) are enriched in basic and acidic residues.

The protein belongs to the FtsZ family. As to quaternary structure, homodimer. Polymerizes to form a dynamic ring structure in a strictly GTP-dependent manner. Interacts directly with several other division proteins.

It is found in the cytoplasm. In terms of biological role, essential cell division protein that forms a contractile ring structure (Z ring) at the future cell division site. The regulation of the ring assembly controls the timing and the location of cell division. One of the functions of the FtsZ ring is to recruit other cell division proteins to the septum to produce a new cell wall between the dividing cells. Binds GTP and shows GTPase activity. The chain is Cell division protein FtsZ from Staphylococcus aureus (strain NCTC 8325 / PS 47).